Reading from the N-terminus, the 561-residue chain is MNINVADLLNGNYILLLFVVLALGLCLGKLRLGSVQLGNSIGVLVVSLLLGQQHFSINTDALNLGFMLFIFCVGVEAGPNFFSIFFRDGKNYLMLALVMVGSALLIALGLGKLFGWDIGLTAGMLAGSMTSTPVLVGAGDTLRHSGIASTQLSSALDNLSLGYALTYLIGLVSLIVGARYLPKLQHQDLQTSAQQIARERGLDTDANRKVYLPVIRAYRVGPELVAWTDGKNLRELGIYRQTGCYIERIRRNGILANPDGDAVLQMGDEIALVGYPDAHARLDPSFRNGKEVFDRDLLDMRIVTEEIVVKNHNAVGRRLAQLKLTDHGCFLNRVIRSQIEMPIDDNVVLNKGDVLQVSGDARRVKTIADRIGFISIHSQVTDLLAFCAFFIIGLMIGMITFQFRNFSFGIGNAAGLLFAGIMLGFLRANHPTFGYIPQGALNMVKEFGLMVFMAGVGLSAGSGISNGLGAVGGQMLIAGLVVSLIPVVICFLFGAYVLRMNRALLFGAMMGARTCAPAMEIISDTARSNIPALGYAGTYAIANVLLTLAGTLIVIIWPGLG.

5 helical membrane passes run 8 to 28 (LLNG…LCLG), 32 to 52 (LGSV…LLGQ), 66 to 86 (FMLF…SIFF), 94 to 114 (MLAL…GKLF), and 158 to 178 (NLSL…IVGA). 2 RCK C-terminal domains span residues 200-288 (RGLD…SFRN) and 292-373 (VFDR…RIGF). 5 helical membrane passes run 383-403 (LLAF…TFQF), 406-426 (FSFG…LGFL), 447-467 (FGLM…ISNG), 475-495 (MLIA…LFGA), and 540-560 (AIAN…WPGL).

Belongs to the AAE transporter (TC 2.A.81) family. YbjL subfamily.

Its subcellular location is the cell membrane. The sequence is that of Putative transport protein YbjL from Salmonella typhi.